We begin with the raw amino-acid sequence, 484 residues long: Sperm-associated antigen 8 (484 aa).

Positions 1 to 11 are enriched in basic and acidic residues; the sequence is METSESTDRSQ. Disordered stretches follow at residues 1–32, 123–221, and 324–348; these read METS…DPFS, DLSS…SAPV, and LQPQ…SHCQ. 2 stretches are compositionally biased toward low complexity: residues 20 to 32 and 125 to 160; these read SSDG…DPFS and SSSR…SSSS. Residues 161-195 show a composition bias toward gly residues; it reads GPGGSPGGSGRGPGHGPGPGGGSGQGPGGGSGQGT. Positions 324–339 are enriched in polar residues; it reads LQPQSPTSSCTTQKDS. 2 mn regions span residues 332–345 and 384–398; these read SCTT…PPKS and ESVT…LVQA. Residues 455-484 are disordered; that stretch reads PLPFEPESYSQHGEISSLACQGGGQGGGGG. Gly residues predominate over residues 475 to 484; sequence QGGGQGGGGG.

Belongs to the SPAG8 family. Microtubule inner protein component of sperm flagellar doublet microtubules. Interacts with FHL5 (via second LIM domain). Interacts with RANBP9. Expressed in trachea multiciliated cells.

The protein resides in the cytoplasm. The protein localises to the nucleus. It is found in the cytoplasmic vesicle. It localises to the secretory vesicle. Its subcellular location is the acrosome. The protein resides in the cytoskeleton. The protein localises to the microtubule organizing center. It is found in the spindle. It localises to the cilium axoneme. Its subcellular location is the flagellum axoneme. Microtubule inner protein (MIP) part of the dynein-decorated doublet microtubules (DMTs) in cilia axoneme, which is required for motile cilia beating. Plays a role in spermatogenesis by enhancing the binding of CREM isoform tau to its coactivator FHL5 and increasing the FHL5-regulated transcriptional activation of CREM isoform tau. Involved in the acrosome reaction and in binding of sperm to the zona pellucida. Plays a role in regulation of the cell cycle by controlling progression through the G2/M phase, possibly by delaying the activation of CDK1 which is required for entry into mitosis. May play a role in fertility and microtubule formation through interaction with RANBP9. This chain is Sperm-associated antigen 8 (SPAG8), found in Bos taurus (Bovine).